The chain runs to 332 residues: L-lactate dehydrogenase A chain (332 aa).

Alanine 2 bears the N-acetylalanine mark. Lysine 5 bears the N6-acetyllysine; alternate mark. Residue lysine 5 is modified to N6-succinyllysine; alternate. At lysine 14 the chain carries N6-acetyllysine. Residue threonine 18 is modified to Phosphothreonine. Position 29 to 57 (29 to 57 (GAVGMACAISILMKDLADELALVDVIEDK)) interacts with NAD(+). N6-acetyllysine; alternate is present on lysine 57. Residue lysine 57 forms a Glycyl lysine isopeptide (Lys-Gly) (interchain with G-Cter in SUMO2); alternate linkage. Lysine 81 carries the post-translational modification N6-acetyllysine. Position 99 (arginine 99) interacts with NAD(+). Arginine 106 contributes to the substrate binding site. Lysine 118 carries the post-translational modification N6-acetyllysine; alternate. An N6-succinyllysine; alternate modification is found at lysine 118. At lysine 126 the chain carries N6-acetyllysine. Asparagine 138 and arginine 169 together coordinate substrate. Histidine 193 functions as the Proton acceptor in the catalytic mechanism. 2 positions are modified to N6-acetyllysine: lysine 224 and lysine 232. Tyrosine 239 is modified (phosphotyrosine). At lysine 243 the chain carries N6-acetyllysine. Threonine 248 lines the substrate pocket. Threonine 309 carries the phosphothreonine modification. Serine 310 carries the post-translational modification Phosphoserine. At lysine 318 the chain carries N6-acetyllysine; alternate. At lysine 318 the chain carries N6-succinyllysine; alternate. The residue at position 322 (threonine 322) is a Phosphothreonine.

The protein belongs to the LDH/MDH superfamily. LDH family. In terms of assembly, homotetramer. Interacts with PTEN upstream reading frame protein MP31. In terms of processing, ISGylated.

It localises to the cytoplasm. The catalysed reaction is (S)-lactate + NAD(+) = pyruvate + NADH + H(+). Its pathway is fermentation; pyruvate fermentation to lactate; (S)-lactate from pyruvate: step 1/1. In terms of biological role, interconverts simultaneously and stereospecifically pyruvate and lactate with concomitant interconversion of NADH and NAD(+). The chain is L-lactate dehydrogenase A chain (LDHA) from Pongo abelii (Sumatran orangutan).